The chain runs to 381 residues: Probable envelope ADP,ATP carrier protein, chloroplastic (381 aa).

The transit peptide at 1–26 (MEEDRAILTFHRIPSLNSSLITTSSP) directs the protein to the chloroplast. 5 consecutive transmembrane segments (helical) span residues 78–98 (LAIL…ALAG), 154–179 (LPQV…NLFK), 191–211 (LAAG…LDVL), 237–257 (IASF…YIAV), and 281–301 (LLTA…LDTV). 3 Solcar repeats span residues 85 to 177 (PKDA…YKNL), 185 to 268 (LSVI…VKKS), and 279 to 359 (SSLL…VKRL). R159 is an ADP binding site. R302 lines the ADP pocket. A helical membrane pass occupies residues 334 to 360 (GFLPNALKTLPNSSIRLTTFDMVKRLI).

Belongs to the mitochondrial carrier (TC 2.A.29) family.

It localises to the plastid. Its subcellular location is the chloroplast membrane. Its function is as follows. Transports adenine nucleotides. In Arabidopsis thaliana (Mouse-ear cress), this protein is Probable envelope ADP,ATP carrier protein, chloroplastic (EAAC).